Reading from the N-terminus, the 418-residue chain is Phosphoglycerate kinase (418 aa).

13 residues coordinate (2R)-3-phosphoglycerate: Val-24, Asp-25, Phe-26, Asn-27, Arg-40, Ser-63, His-64, Gly-66, Arg-67, Leu-122, Arg-123, His-169, and Arg-170. ADP is bound at residue Gly-213. Gly-213 lines the CDP pocket. Positions 214 and 215 each coordinate AMP. Ala-214 contacts ATP. Ala-214 lines the Mg(2+) pocket. Residues Ala-217 and Asp-218 each contribute to the Mg(2+) site. Asp-218 contacts CDP. AMP is bound at residue Lys-219. Lys-219 contacts ATP. ADP is bound at residue Gly-237. Gly-237 serves as a coordination point for CDP. AMP contacts are provided by Gly-238 and Gly-312. Residues Gly-238 and Gly-312 each coordinate ATP. Positions 337 and 342 each coordinate CDP. ADP is bound at residue Phe-342. Position 343 (Glu-343) interacts with AMP. The ATP site is built by Glu-343, Asp-374, and Thr-375. Mg(2+) is bound at residue Asp-374.

It belongs to the phosphoglycerate kinase family. As to quaternary structure, monomer. Requires Mg(2+) as cofactor.

It carries out the reaction (2R)-3-phosphoglycerate + ATP = (2R)-3-phospho-glyceroyl phosphate + ADP. It functions in the pathway carbohydrate degradation; glycolysis; pyruvate from D-glyceraldehyde 3-phosphate: step 2/5. This is Phosphoglycerate kinase (PGK) from Euplotes crassus.